A 1068-amino-acid polypeptide reads, in one-letter code: Integrator complex subunit 3 homolog (1068 aa).

Disordered regions lie at residues 916 to 939 and 1001 to 1068; these read YPSS…STPS and VGRR…NDSD. A phosphoserine mark is found at S1038, S1039, S1043, and S1044.

The protein belongs to the Integrator subunit 3 family. Belongs to the multiprotein complex Integrator, at least composed of IntS1, IntS2, IntS3, IntS4, omd/IntS5, IntS6, defl/IntS7, IntS8, IntS9, IntS10, IntS11, IntS12, asun/IntS13, IntS14 and IntS15. The core complex associates with protein phosphatase 2A subunits mts/PP2A and Pp2A-29B, to form the Integrator-PP2A (INTAC) complex.

Its subcellular location is the nucleus. It is found in the cytoplasm. Component of the integrator complex, a multiprotein complex that terminates RNA polymerase II (Pol II) transcription in the promoter-proximal region of genes. The integrator complex provides a quality checkpoint during transcription elongation by driving premature transcription termination of transcripts that are unfavorably configured for transcriptional elongation: the complex terminates transcription by (1) catalyzing dephosphorylation of the C-terminal domain (CTD) of Pol II subunit Polr2A/Rbp1 and Spt5, and (2) degrading the exiting nascent RNA transcript via endonuclease activity. The integrator complex is also involved in the 3'-end processing of the U7 snRNA, and also the spliceosomal snRNAs U1, U2, U4 and U5. This is Integrator complex subunit 3 homolog (IntS3) from Drosophila sechellia (Fruit fly).